Here is a 534-residue protein sequence, read N- to C-terminus: Ulvan lyase NLR42 (534 aa).

Positions 1 to 47 are cleaved as a signal peptide; sequence MVFFKDLFIFKSLIKGSLYSGHMKKKLLNYLPLFALMLFTVSMMAQT. A disulfide bridge links Cys-59 with Cys-89. Ca(2+)-binding residues include Gly-63, Asn-68, Asp-86, Thr-88, Ala-91, and Asp-92. Residue Tyr-164 coordinates substrate. Lys-169 (proton acceptor) is an active-site residue. Substrate-binding positions include 218–223 and 288–291; these read SGAAGR and YRVK. Residue Tyr-288 is the Proton donor/acceptor of the active site. The ulvan-binding domain stretch occupies residues 316–449; that stretch reads PAADIYRIKN…SKWNLESTTL (134 aa). The propeptide at 450–534 is removed by the type IX secretion system (T9SS); that stretch reads SVDSQQIASV…KVYQTKLIVN (85 aa).

This sequence belongs to the polysaccharide lyase 28 family. It depends on Ca(2+) as a cofactor.

The protein localises to the secreted. Functionally, ulvan lyase involved in ulvan degradation. Ulvan is the main polysaccharide component of the Ulvales (green seaweed) cell wall. It is composed of disaccharide building blocks comprising 3-sulfated rhamnose (Rha3S) linked to D-glucuronic acid (GlcA), L-iduronic acid (IduA), or D-xylose (Xyl). Ulvan lyase catalyzes the endolytic cleavage of the glycosidic bond between Rha3S and the uronic acids GlcA or IduA, producing oligosaccharides that have unsaturated 4-deoxy-L-threo-hex-4-enopyranosiduronic acid (deltaUA) at the non-reducing end. This results eventually in the degradation of the ulvan polysaccharide into deltaUA-Rha3S disaccharides and deltaUA-Rha3S-Xyl-Rha3S tetrasaccharides. The polypeptide is Ulvan lyase NLR42 (Nonlabens ulvanivorans (Persicivirga ulvanivorans)).